We begin with the raw amino-acid sequence, 380 residues long: 8-amino-7-oxononanoate synthase (380 aa).

Arg26 is a substrate binding site. 104-105 (GY) is a pyridoxal 5'-phosphate binding site. Residue His129 coordinates substrate. Residues Ser175, 200–203 (DEAH), and 232–235 (TLSK) contribute to the pyridoxal 5'-phosphate site. Lys235 bears the N6-(pyridoxal phosphate)lysine mark. Thr345 serves as a coordination point for substrate.

This sequence belongs to the class-II pyridoxal-phosphate-dependent aminotransferase family. BioF subfamily. In terms of assembly, homodimer. Requires pyridoxal 5'-phosphate as cofactor.

The enzyme catalyses 6-carboxyhexanoyl-[ACP] + L-alanine + H(+) = (8S)-8-amino-7-oxononanoate + holo-[ACP] + CO2. It participates in cofactor biosynthesis; biotin biosynthesis. Functionally, catalyzes the decarboxylative condensation of pimeloyl-[acyl-carrier protein] and L-alanine to produce 8-amino-7-oxononanoate (AON), [acyl-carrier protein], and carbon dioxide. The protein is 8-amino-7-oxononanoate synthase of Mycolicibacterium gilvum (strain PYR-GCK) (Mycobacterium gilvum (strain PYR-GCK)).